Here is a 236-residue protein sequence, read N- to C-terminus: Small ribosomal subunit protein uS2c (236 aa).

This sequence belongs to the universal ribosomal protein uS2 family.

The protein resides in the plastid. The protein localises to the chloroplast. The chain is Small ribosomal subunit protein uS2c (rps2) from Citrus sinensis (Sweet orange).